Reading from the N-terminus, the 1641-residue chain is Histone-lysine N-methyltransferase SETD1 (1641 aa).

The tract at residues 1-23 (MQDVRNINLVNNSSNSHDSSLAN) is disordered. A compositionally biased stretch (low complexity) spans 8–23 (NLVNNSSNSHDSSLAN). The RRM domain occupies 101–179 (VEVTIVNLND…KILDVFCDPF (79 aa)). Disordered stretches follow at residues 236–384 (YTTQ…IDQR), 537–596 (APPF…SDEE), 831–915 (RIRK…SSSS), 930–949 (KART…NLNQ), 1119–1155 (QEKR…RKTA), and 1205–1226 (NSKG…SSQA). Residues 244–284 (IPNRSRDRNWNRDKERERDRHFKERSRHSSERSYDRDRGMR) show a composition bias toward basic and acidic residues. Residues 291–300 (IRRRRTFYRR) are compositionally biased toward basic residues. 2 stretches are compositionally biased toward basic and acidic residues: residues 308-341 (EDSR…ESFR) and 349-384 (KGRD…IDQR). Residues 556-568 (EVFSDVNSDSNNS) show a composition bias toward low complexity. Composition is skewed to basic and acidic residues over residues 569-579 (ENKKRSCEKNN) and 844-867 (NFLE…KEDS). Positions 904-915 (SASSFFSSSSSS) are enriched in low complexity. Composition is skewed to basic and acidic residues over residues 930–939 (KARTSEEDSP) and 1119–1128 (QEKRIEKSLD). Residues 1091–1132 (SEEEKEYQERRKRNTEYMAQMEREFLEEQEKRIEKSLDKNLQ) are a coiled coil. Composition is skewed to polar residues over residues 1129–1145 (KNLQ…NSPR) and 1205–1217 (NSKG…QSPV). The RxxxRR motif motif lies at 1473–1478 (RSNQRR). One can recognise an SET domain in the interval 1502 to 1619 (KQLKFAKSAI…INEEITYDYK (118 aa)). Tyr-1618 contacts S-adenosyl-L-methionine. One can recognise a Post-SET domain in the interval 1625–1641 (EKIPCLCGAQGCRGTLN).

Belongs to the class V-like SAM-binding methyltransferase superfamily. Component of the Set1C/COMPASS complex, composed at least of the catalytic subunit Set1, wds/WDR5, Wdr82, Rbbp5, ash2, Cfp1/CXXC1, hcf and Dpy-30L1.

The protein resides in the nucleus. Its subcellular location is the chromosome. The catalysed reaction is L-lysyl(4)-[histone H3] + 3 S-adenosyl-L-methionine = N(6),N(6),N(6)-trimethyl-L-lysyl(4)-[histone H3] + 3 S-adenosyl-L-homocysteine + 3 H(+). The enzyme catalyses N(6)-methyl-L-lysyl(4)-[histone H3] + S-adenosyl-L-methionine = N(6),N(6)-dimethyl-L-lysyl(4)-[histone H3] + S-adenosyl-L-homocysteine + H(+). It carries out the reaction N(6),N(6)-dimethyl-L-lysyl(4)-[histone H3] + S-adenosyl-L-methionine = N(6),N(6),N(6)-trimethyl-L-lysyl(4)-[histone H3] + S-adenosyl-L-homocysteine + H(+). Catalytic component of the COMPASS (Set1C) complex that specifically mono-, di- and trimethylates histone H3 to form H3K4me1/2/3. Binds RNAs which might negatively affect its histone methyltransferase activity. COMPASS recognizes ubiquitinated H2B on one face of the nucleosome which stimulates the methylation of H3 on the opposing face. Set1-dependent trimethylation regulates chromatin changes at active promoters that ensure optimal RNA polymerase II release into productive elongation, thereby contributing to optimal transcription. The protein is Histone-lysine N-methyltransferase SETD1 of Drosophila melanogaster (Fruit fly).